The chain runs to 155 residues: Large ribosomal subunit protein uL15 (155 aa).

A compositionally biased stretch (basic and acidic residues) spans 1–13 (MKLNELRDCEGAT). The segment at 1 to 47 (MKLNELRDCEGATKNRKRIGRGIGSGTGKTGGRGVKGQKSRSGVSLN) is disordered. The span at 21-35 (RGIGSGTGKTGGRGV) shows a compositional bias: gly residues.

The protein belongs to the universal ribosomal protein uL15 family. As to quaternary structure, part of the 50S ribosomal subunit.

Binds to the 23S rRNA. The polypeptide is Large ribosomal subunit protein uL15 (Bartonella tribocorum (strain CIP 105476 / IBS 506)).